The sequence spans 603 residues: Elongation factor 4 (603 aa).

The tr-type G domain maps to Ser7 to Ala189. GTP-binding positions include Asp19–Thr24 and Asn136–Asp139.

This sequence belongs to the TRAFAC class translation factor GTPase superfamily. Classic translation factor GTPase family. LepA subfamily.

The protein resides in the cell inner membrane. It catalyses the reaction GTP + H2O = GDP + phosphate + H(+). Required for accurate and efficient protein synthesis under certain stress conditions. May act as a fidelity factor of the translation reaction, by catalyzing a one-codon backward translocation of tRNAs on improperly translocated ribosomes. Back-translocation proceeds from a post-translocation (POST) complex to a pre-translocation (PRE) complex, thus giving elongation factor G a second chance to translocate the tRNAs correctly. Binds to ribosomes in a GTP-dependent manner. The chain is Elongation factor 4 from Synechocystis sp. (strain ATCC 27184 / PCC 6803 / Kazusa).